Reading from the N-terminus, the 406-residue chain is MPPVVGKKAKKGILERLNAGEIVIGDGGFVFALEKRGYVKAGPWTPEAAVEHPEAVRQLHREFLRAGSNVMQTFTFYASEDKLENRGNYVLEKISGQKVNEAACDIARQVADEGDALVAGGVSQTPSYLSCKSETEVKKVFLQQLEVFMKKNVDFLIAEYFEHVEEAVWAVETLIASGKPVAATMCIGPEGDLHGVPPGECAVRLVKAGASIIGVNCHFDPTISLKTVKLMKEGLEAARLKAHLMSQPLAYHTPDCNKQGFIDLPEFPFGLEPRVATRWDIQKYAREAYNMGIRYIGGCCGFEPYHIRAIAEELAPERGFLPPASEKHGSWGSALDMHTKPWVRARARKEYWENLRIASGRPYNPSMSKPDGWGVTKGTAELMQQKEATTEQQLKELFEKQKFKLQ.

Residues 11 to 314 (KGILERLNAG…YHIRAIAEEL (304 aa)) enclose the Hcy-binding domain. N6-succinyllysine is present on residues lysine 40, lysine 93, and lysine 98. A Zn(2+)-binding site is contributed by cysteine 217. An N6-succinyllysine mark is found at lysine 232 and lysine 241. Residues cysteine 299 and cysteine 300 each coordinate Zn(2+). At serine 330 the chain carries Phosphoserine. N6-succinyllysine occurs at positions 340 and 377.

Homotetramer. Zn(2+) is required as a cofactor.

It localises to the cytoplasm. Its subcellular location is the cytosol. The protein localises to the nucleus. It catalyses the reaction L-homocysteine + glycine betaine = N,N-dimethylglycine + L-methionine. Its pathway is amine and polyamine degradation; betaine degradation; sarcosine from betaine: step 1/2. It participates in amino-acid biosynthesis; L-methionine biosynthesis via de novo pathway; L-methionine from L-homocysteine (BhmT route): step 1/1. Its function is as follows. Involved in the regulation of homocysteine metabolism. Converts betaine and homocysteine to dimethylglycine and methionine, respectively. This reaction is also required for the irreversible oxidation of choline. This is Betaine--homocysteine S-methyltransferase 1 (BHMT) from Pongo abelii (Sumatran orangutan).